Here is a 141-residue protein sequence, read N- to C-terminus: Nucleoside diphosphate kinase (141 aa).

The ATP site is built by K11, F59, R87, T93, R104, and N114. H117 functions as the Pros-phosphohistidine intermediate in the catalytic mechanism.

Belongs to the NDK family. Homotetramer. Mg(2+) is required as a cofactor.

The protein resides in the cytoplasm. It carries out the reaction a 2'-deoxyribonucleoside 5'-diphosphate + ATP = a 2'-deoxyribonucleoside 5'-triphosphate + ADP. The enzyme catalyses a ribonucleoside 5'-diphosphate + ATP = a ribonucleoside 5'-triphosphate + ADP. Its function is as follows. Major role in the synthesis of nucleoside triphosphates other than ATP. The ATP gamma phosphate is transferred to the NDP beta phosphate via a ping-pong mechanism, using a phosphorylated active-site intermediate. This chain is Nucleoside diphosphate kinase, found in Burkholderia cenocepacia (strain HI2424).